Consider the following 838-residue polypeptide: Protein translocase subunit SecA (838 aa).

Residues Gln-85, 103–107, and Asp-493 each bind ATP; that span reads GEGKT. Residues Cys-823, Cys-825, Cys-834, and His-835 each contribute to the Zn(2+) site.

The protein belongs to the SecA family. Monomer and homodimer. Part of the essential Sec protein translocation apparatus which comprises SecA, SecYEG and auxiliary proteins SecDF. Other proteins may also be involved. Requires Zn(2+) as cofactor.

It localises to the cell membrane. The protein localises to the cytoplasm. The enzyme catalyses ATP + H2O + cellular proteinSide 1 = ADP + phosphate + cellular proteinSide 2.. Functionally, part of the Sec protein translocase complex. Interacts with the SecYEG preprotein conducting channel. Has a central role in coupling the hydrolysis of ATP to the transfer of proteins into and across the cell membrane, serving as an ATP-driven molecular motor driving the stepwise translocation of polypeptide chains across the membrane. The chain is Protein translocase subunit SecA from Streptococcus gordonii (strain Challis / ATCC 35105 / BCRC 15272 / CH1 / DL1 / V288).